Consider the following 247-residue polypeptide: Dynein axonemal assembly factor 19 (247 aa).

The stretch at 12-32 (LEKELHSALQADRKYQRENDA) forms a coiled coil.

Belongs to the DNAAF19/PR46b family. As to quaternary structure, homodimer. Expressed in all cells bearing motile cilia.

It is found in the cytoplasm. The protein resides in the cell projection. It localises to the cilium. The protein localises to the flagellum. In terms of biological role, dynein-attachment factor required for cilia motility. This is Dynein axonemal assembly factor 19 (dnaaf19) from Danio rerio (Zebrafish).